The following is an 80-amino-acid chain: Protein FAM229B (80 aa).

The interval 1 to 44 (MPFRFGTQPRRFPVEGGDSSIGLEPGLSSSATCNGKEMSPTRQL) is disordered.

It belongs to the FAM229 family.

The polypeptide is Protein FAM229B (FAM229B) (Bos taurus (Bovine)).